Here is a 193-residue protein sequence, read N- to C-terminus: Fe/S biogenesis protein NfuA (193 aa).

2 residues coordinate [4Fe-4S] cluster: Cys-149 and Cys-152.

It belongs to the NfuA family. As to quaternary structure, homodimer. It depends on [4Fe-4S] cluster as a cofactor.

Functionally, involved in iron-sulfur cluster biogenesis. Binds a 4Fe-4S cluster, can transfer this cluster to apoproteins, and thereby intervenes in the maturation of Fe/S proteins. Could also act as a scaffold/chaperone for damaged Fe/S proteins. The sequence is that of Fe/S biogenesis protein NfuA from Psychromonas ingrahamii (strain DSM 17664 / CCUG 51855 / 37).